The sequence spans 201 residues: Small ribosomal subunit protein uS4c (201 aa).

The interval 20-43 (GLTNKRPKSRNDPTNQSSSRKISQ) is disordered. Residues 31 to 41 (DPTNQSSSRKI) are compositionally biased toward polar residues. The region spanning 89 to 157 (MRLDNIIFRL…IGKNLDLSQK (69 aa)) is the S4 RNA-binding domain.

Belongs to the universal ribosomal protein uS4 family. Part of the 30S ribosomal subunit. Contacts protein S5. The interaction surface between S4 and S5 is involved in control of translational fidelity.

It is found in the plastid. It localises to the chloroplast. Functionally, one of the primary rRNA binding proteins, it binds directly to 16S rRNA where it nucleates assembly of the body of the 30S subunit. Its function is as follows. With S5 and S12 plays an important role in translational accuracy. In Cycas taitungensis (Prince sago), this protein is Small ribosomal subunit protein uS4c (rps4).